Here is a 700-residue protein sequence, read N- to C-terminus: MTAPFRLHAPFAPAGDQPRAITELSSGLHRGDRIQTLLGVTGSGKTMTMANVIADWGRPTLVLSHNKTLAAQLYGELKSFFPNNAVEYFISYYDYYQPEAYVPSSDTYIEKDASINEDIDRLRLRATSSLMERDDVVIVSTVSAIYGLGDPVQYRERMVALSRGQQIARDDILRALVGIQYLRNDVAFERGTFRVRGDTVEILPAYEEQAVRIELWGDEIERISKIDPVTGETIAALERMAIYPAKHFITNRPTIERASMAIRDELATRLAELRMAGKLLEAQRLEQRTQFDLEMLMEIGTCAGIENYSRHISGREAGERPACLLDYFPDDYLVVVDESHVTLPQIRAMYNGDRARKLTLVDYGFRLPSALDNRPLVFDEFMSLVPRLVNVSATPGELELQLSEGVVVEQVIRPTGLLDPVLEVRPVKGQVDDLLHEIRARERRGERVLVTTLTKRMSEDLTDYLQQMGVRVRYMHSDIDAIERMEIVRGLRLGEFDVLVGINLLREGLDMPEVSLVAILDADQEGFLRSDRSLIQTIGRAARNLHGMAILYGDRITGSMQRAIDETTRRRTIQREHNEAHGIVPRGVTKSVDEVRFITRVADARVEREGEAPAPRRLASESAPRSREELETLVGELEIAMREAAVALDFEAAARLRDQLFEVRTALGQAPSEARGNAQAPKRPPGSAPQRRAGGGRRGR.

The region spanning Ser-26–Arg-183 is the Helicase ATP-binding domain. Gly-39–Thr-46 provides a ligand contact to ATP. The Beta-hairpin signature appears at Tyr-92 to Ile-115. Residues Gln-430–Arg-596 form the Helicase C-terminal domain. The segment at Arg-608 to Arg-627 is disordered. The region spanning Glu-631–Ala-666 is the UVR domain. The disordered stretch occupies residues Leu-667 to Arg-700.

It belongs to the UvrB family. Forms a heterotetramer with UvrA during the search for lesions. Interacts with UvrC in an incision complex.

The protein resides in the cytoplasm. In terms of biological role, the UvrABC repair system catalyzes the recognition and processing of DNA lesions. A damage recognition complex composed of 2 UvrA and 2 UvrB subunits scans DNA for abnormalities. Upon binding of the UvrA(2)B(2) complex to a putative damaged site, the DNA wraps around one UvrB monomer. DNA wrap is dependent on ATP binding by UvrB and probably causes local melting of the DNA helix, facilitating insertion of UvrB beta-hairpin between the DNA strands. Then UvrB probes one DNA strand for the presence of a lesion. If a lesion is found the UvrA subunits dissociate and the UvrB-DNA preincision complex is formed. This complex is subsequently bound by UvrC and the second UvrB is released. If no lesion is found, the DNA wraps around the other UvrB subunit that will check the other stand for damage. In Gemmatimonas aurantiaca (strain DSM 14586 / JCM 11422 / NBRC 100505 / T-27), this protein is UvrABC system protein B.